A 171-amino-acid polypeptide reads, in one-letter code: Transcription antitermination protein NusB (171 aa).

This sequence belongs to the NusB family.

Involved in transcription antitermination. Required for transcription of ribosomal RNA (rRNA) genes. Binds specifically to the boxA antiterminator sequence of the ribosomal RNA (rrn) operons. This chain is Transcription antitermination protein NusB, found in Brucella melitensis biotype 1 (strain ATCC 23456 / CCUG 17765 / NCTC 10094 / 16M).